The following is a 148-amino-acid chain: Large ribosomal subunit protein uL15 (148 aa).

A compositionally biased stretch (basic and acidic residues) spans 1 to 10 (MQLHNLEYKK). Positions 1 to 42 (MQLHNLEYKKGSRNHKEKRVGRGHGSGLGKTSGRGQDGQKAR) are disordered. Positions 11 to 22 (GSRNHKEKRVGR) are enriched in basic residues. The segment covering 23-36 (GHGSGLGKTSGRGQ) has biased composition (gly residues).

The protein belongs to the universal ribosomal protein uL15 family. Part of the 50S ribosomal subunit.

In terms of biological role, binds to the 23S rRNA. The sequence is that of Large ribosomal subunit protein uL15 from Ureaplasma urealyticum serovar 10 (strain ATCC 33699 / Western).